The following is a 524-amino-acid chain: M phase phosphoprotein 10 (524 aa).

The Nuclear localization signal 1 motif lies at 85-92 (VKRFAKNP). Disordered regions lie at residues 100–243 (KLAL…KLGK) and 259–283 (KLKD…STHE). Residues 109–168 (DDIDEMDMDGFDSDDVDDEDKEIESNDSEGEDEEEEEEDEEEEEEEEEEEEEEKDGDNEG) are compositionally biased toward acidic residues. Residues 131–165 (IESNDSEGEDEEEEEEDEEEEEEEEEEEEEEKDGD) adopt a coiled-coil conformation. Basic and acidic residues predominate over residues 169–180 (IEDKFFKIKELE). Residues 181–191 (EFLEEGEAEEY) are compositionally biased toward acidic residues. Basic residues predominate over residues 196–207 (KNKKGVAQRKKQ). Acidic residues predominate over residues 210–238 (SDDEDEEDDDDEEEDVEFDAFAGGDDEET). Residues 257 to 302 (KMKLKDLSEDEEAEIENKGNEKLSTHERARLKLQSKIEQMEKANLD) adopt a coiled-coil conformation. Residues 271-283 (IENKGNEKLSTHE) are compositionally biased toward basic and acidic residues. A Nuclear localization signal 2 motif is present at residues 373-380 (GKREAKEL). A disordered region spans residues 479–524 (KGDIKDESELTQEDRKRRRANKKRKFKAESANEPPKKALDTSTKNP). Basic and acidic residues predominate over residues 480–493 (GDIKDESELTQEDR). Basic residues predominate over residues 494-504 (KRRRANKKRKF). A compositionally biased stretch (basic and acidic residues) spans 505–517 (KAESANEPPKKAL).

This sequence belongs to the MPP10 family. As to quaternary structure, component of the ribosomal small subunit (SSU) processome. Interacts with THAL in the nucleus.

Its subcellular location is the nucleus. The protein localises to the nucleolus. In terms of biological role, involved in nucleolar processing of pre-18S ribosomal RNA. This Arabidopsis thaliana (Mouse-ear cress) protein is M phase phosphoprotein 10.